Consider the following 610-residue polypeptide: Elongation factor 4 (610 aa).

Residues 11–193 (EKIRNFSIIA…QIVEKVPAPT (183 aa)) form the tr-type G domain. GTP is bound by residues 23–28 (DHGKST) and 140–143 (NKID).

This sequence belongs to the TRAFAC class translation factor GTPase superfamily. Classic translation factor GTPase family. LepA subfamily.

The protein resides in the cell membrane. The catalysed reaction is GTP + H2O = GDP + phosphate + H(+). Required for accurate and efficient protein synthesis under certain stress conditions. May act as a fidelity factor of the translation reaction, by catalyzing a one-codon backward translocation of tRNAs on improperly translocated ribosomes. Back-translocation proceeds from a post-translocation (POST) complex to a pre-translocation (PRE) complex, thus giving elongation factor G a second chance to translocate the tRNAs correctly. Binds to ribosomes in a GTP-dependent manner. The polypeptide is Elongation factor 4 (Streptococcus agalactiae serotype Ia (strain ATCC 27591 / A909 / CDC SS700)).